Here is a 464-residue protein sequence, read N- to C-terminus: Cysteine--tRNA ligase (464 aa).

Cysteine 27 serves as a coordination point for Zn(2+). Residues 29-39 (PTVYNYFHIGN) carry the 'HIGH' region motif. Residues cysteine 207, histidine 232, and glutamate 236 each coordinate Zn(2+). A 'KMSKS' region motif is present at residues 264–268 (KMSKS). Position 267 (lysine 267) interacts with ATP.

Belongs to the class-I aminoacyl-tRNA synthetase family. In terms of assembly, monomer. Zn(2+) serves as cofactor.

The protein localises to the cytoplasm. It catalyses the reaction tRNA(Cys) + L-cysteine + ATP = L-cysteinyl-tRNA(Cys) + AMP + diphosphate. This chain is Cysteine--tRNA ligase, found in Alkaliphilus oremlandii (strain OhILAs) (Clostridium oremlandii (strain OhILAs)).